The following is a 367-amino-acid chain: ABI gene family member 3 (367 aa).

Residues 36–64 are a coiled coil; sequence CEDNYLQATDKRKALEETMAFTTQALASV. Positions 163–273 are disordered; the sequence is LSRTGTLSRK…LEVSQPPLEA (111 aa). Positions 206–225 are enriched in low complexity; the sequence is SAASSASSLASAGSAEGASG. Ser216 and Ser219 each carry phosphoserine. A compositionally biased stretch (pro residues) spans 236–264; the sequence is ATPPPPPVAPVTPPPPPLSAEVFLPPPPL. In terms of domain architecture, SH3 spans 309 to 367; the sequence is SYLEKVVTLYPYTRQKDNELSFSEGTVICVTRRYSDGWCEGVSSEGTGFFPGNYVEPSC. Ser343 is modified (phosphoserine).

Belongs to the ABI family. May interact with PAK1 and PAK2. Probably interacts with TARSH.

The protein localises to the cytoplasm. Functionally, inhibits ectopic tumor cell metastasis of SRD cells. In vitro, reduces cell motility. This Mus musculus (Mouse) protein is ABI gene family member 3 (Abi3).